Consider the following 261-residue polypeptide: Cytochrome c oxidase subunit 3 (261 aa).

The Mitochondrial matrix portion of the chain corresponds to 1–15; that stretch reads MTHQTHSYHMVNPSP. A helical transmembrane segment spans residues 16–34; it reads WPLTGALSALLMTSGLIMW. Residues 35–40 lie on the Mitochondrial intermembrane side of the membrane; it reads FHFNSM. The chain crosses the membrane as a helical span at residues 41–66; the sequence is ILLTLGLSTNILTMYQWWRDIIREST. Residues 67–72 lie on the Mitochondrial matrix side of the membrane; it reads FQGHHT. The chain crosses the membrane as a helical span at residues 73 to 105; sequence PTVQKGLRYGMILFIVSEVLFFTGFFWAFYHSS. Residues 106–128 lie on the Mitochondrial intermembrane side of the membrane; it reads LAPTPELGGCWPPTGIHPLNPLE. The chain crosses the membrane as a helical span at residues 129 to 152; the sequence is VPLLNTSVLLASGVSITWAHHSLM. Over 153-155 the chain is Mitochondrial matrix; that stretch reads EGN. The chain crosses the membrane as a helical span at residues 156 to 183; sequence RKHMLQALFITIALGLYFTLLQASEYYE. The Mitochondrial intermembrane segment spans residues 184–190; that stretch reads APFTISD. A helical transmembrane segment spans residues 191 to 223; the sequence is GIYGSTFFVATGFHGLHVIIGSTFLIVCFLRQV. Residues 224 to 232 lie on the Mitochondrial matrix side of the membrane; the sequence is KFHFTSNHH. The chain crosses the membrane as a helical span at residues 233-256; that stretch reads FGFERAAWYWHFVDVVWLFLYVSI. Topologically, residues 257–261 are mitochondrial intermembrane; it reads YWWGS.

The protein belongs to the cytochrome c oxidase subunit 3 family. Component of the cytochrome c oxidase (complex IV, CIV), a multisubunit enzyme composed of 14 subunits. The complex is composed of a catalytic core of 3 subunits MT-CO1, MT-CO2 and MT-CO3, encoded in the mitochondrial DNA, and 11 supernumerary subunits COX4I, COX5A, COX5B, COX6A, COX6B, COX6C, COX7A, COX7B, COX7C, COX8 and NDUFA4, which are encoded in the nuclear genome. The complex exists as a monomer or a dimer and forms supercomplexes (SCs) in the inner mitochondrial membrane with NADH-ubiquinone oxidoreductase (complex I, CI) and ubiquinol-cytochrome c oxidoreductase (cytochrome b-c1 complex, complex III, CIII), resulting in different assemblies (supercomplex SCI(1)III(2)IV(1) and megacomplex MCI(2)III(2)IV(2)).

It localises to the mitochondrion inner membrane. It catalyses the reaction 4 Fe(II)-[cytochrome c] + O2 + 8 H(+)(in) = 4 Fe(III)-[cytochrome c] + 2 H2O + 4 H(+)(out). Functionally, component of the cytochrome c oxidase, the last enzyme in the mitochondrial electron transport chain which drives oxidative phosphorylation. The respiratory chain contains 3 multisubunit complexes succinate dehydrogenase (complex II, CII), ubiquinol-cytochrome c oxidoreductase (cytochrome b-c1 complex, complex III, CIII) and cytochrome c oxidase (complex IV, CIV), that cooperate to transfer electrons derived from NADH and succinate to molecular oxygen, creating an electrochemical gradient over the inner membrane that drives transmembrane transport and the ATP synthase. Cytochrome c oxidase is the component of the respiratory chain that catalyzes the reduction of oxygen to water. Electrons originating from reduced cytochrome c in the intermembrane space (IMS) are transferred via the dinuclear copper A center (CU(A)) of subunit 2 and heme A of subunit 1 to the active site in subunit 1, a binuclear center (BNC) formed by heme A3 and copper B (CU(B)). The BNC reduces molecular oxygen to 2 water molecules using 4 electrons from cytochrome c in the IMS and 4 protons from the mitochondrial matrix. The protein is Cytochrome c oxidase subunit 3 (MT-CO3) of Balaenoptera musculus (Blue whale).